Here is a 333-residue protein sequence, read N- to C-terminus: NADH dehydrogenase (ubiquinone) complex I, assembly factor 6 (333 aa).

A mitochondrion-targeting transit peptide spans 1-44 (MAASAHGSVWGPLRLGIPGLCCRRPPLGLYARMRRLPGPEVSGR).

The protein belongs to the NDUFAF6 family. Widely expressed. A lower expression is observed in lung and kidney compared to heart, muscle and liver. In the kidney, expression is high in the basal zone of the proximal tubular cells.

It localises to the mitochondrion inner membrane. The protein localises to the cytoplasm. Its subcellular location is the nucleus. Its function is as follows. Involved in the assembly of mitochondrial NADH:ubiquinone oxidoreductase complex (complex I) at early stages. May play a role in the biogenesis of complex I subunit MT-ND1. The polypeptide is NADH dehydrogenase (ubiquinone) complex I, assembly factor 6 (NDUFAF6) (Homo sapiens (Human)).